Consider the following 376-residue polypeptide: Delta(12) fatty acid desaturase fat-2 (376 aa).

4 helical membrane passes run 45 to 65 (ISYL…VPYI), 69 to 89 (LGWI…SALF), 203 to 223 (VKCA…FVLC), and 228 to 248 (YTFV…LVII).

It belongs to the fatty acid desaturase type 1 family.

It localises to the membrane. It catalyses the reaction (9Z)-octadecenoyl-CoA + 2 Fe(II)-[cytochrome b5] + O2 + 2 H(+) = (9Z,12Z)-octadecadienoyl-CoA + 2 Fe(III)-[cytochrome b5] + 2 H2O. The enzyme catalyses (9Z)-hexadecenoyl-CoA + 2 Fe(II)-[cytochrome b5] + O2 + 2 H(+) = (9Z,12Z)-hexadecadienoyl-CoA + 2 Fe(III)-[cytochrome b5] + 2 H2O. The catalysed reaction is (9Z,12Z)-octadecadienoyl-CoA + 2 Fe(II)-[cytochrome b5] + O2 + 2 H(+) = (9Z,12Z,15Z)-octadecatrienoyl-CoA + 2 Fe(III)-[cytochrome b5] + 2 H2O. It carries out the reaction (9Z)-heptadecenoyl-CoA + 2 Fe(II)-[cytochrome b5] + O2 + 2 H(+) = (9Z,12Z)-heptadecadienoyl-CoA + 2 Fe(III)-[cytochrome b5] + 2 H2O. It catalyses the reaction (9Z)-pentadecenoyl-CoA + 2 Fe(II)-[cytochrome b5] + O2 + 2 H(+) = (9Z,12Z)-pentadecadienoyl-CoA + 2 Fe(III)-[cytochrome b5] + 2 H2O. The enzyme catalyses (6Z,9Z,12Z)-octadecatrienoyl-CoA + 2 Fe(II)-[cytochrome b5] + O2 + 2 H(+) = (6Z,9Z,12Z,15Z)-octadecatetraenoyl-CoA + 2 Fe(III)-[cytochrome b5] + 2 H2O. The catalysed reaction is (9Z)-tetradecenoyl-CoA + 2 Fe(II)-[cytochrome b5] + O2 + 2 H(+) = (9Z,12Z)-tetradecadienoyl-CoA + 2 Fe(III)-[cytochrome b5] + 2 H2O. It participates in lipid metabolism; polyunsaturated fatty acid biosynthesis. Functionally, can function as a Delta(12)/Delta(15) bifunctional desaturase and behaves as a nu +3' desaturase. Introduces a double bond in the fatty acid chain three carbons away from an existing double bond to biosynthesize polyunsaturated fatty acids (PUFAs) endogenously (PUFAs are essential for membrane structure and many cellular and physiological processes). Acts on a number of substrates like oleoyl-CoA ((9Z)-octadecenoyl-CoA, 18:1n-9), palmitoleoyl-CoA ((9Z)-hexadecenoyl-CoA, 16:1n-7), and gamma-linolenoyl-CoA ((6Z,9Z,12Z)-octadecatrienoyl-CoA, 18:3n-6), to generate linoleoyl-CoA ((9Z,12Z)-octadecadienoyl-CoA, 18:2n-6), (9Z,12Z)-hexadecadienoyl-CoA (16:2n-4) and (6Z,9Z,12Z,15Z)-octadecatetraenoyl-CoA (18:4n-3) respectively. Unlike plants, Caenorhabditis elegans desaturases seem to use fatty acyl-CoAs as substrates. The protein is Delta(12) fatty acid desaturase fat-2 (fat-2) of Caenorhabditis elegans.